The chain runs to 226 residues: MATTVKDTMNVDINAIKKGEIRMGTTITALRYKDGVILAADSRTTMGAYIANRVTDKLTQLTDNIWCCRSGSAADTQTVADLLKYYLSMYRIQFGHDPSVHTAATLASEMCYQNKNMLSAGLIVAGYDEKTGGDVYSIPLGGSLHKQPLAIGGSGSAFIYGFCDANFRENMTQEEAVEFLKNAVALAMERDGSSGGTIRMVILNKDGMERKFFAIDTANPIPVFTH.

Positions 1–24 are cleaved as a propeptide — removed in mature form; that stretch reads MATTVKDTMNVDINAIKKGEIRMG. Catalysis depends on Thr25, which acts as the Nucleophile.

The protein belongs to the peptidase T1B family. The 26S proteasome consists of a 20S proteasome core and two 19S regulatory subunits. The 20S proteasome core is composed of 28 subunits that are arranged in four stacked rings, resulting in a barrel-shaped structure. The two end rings are each formed by seven alpha subunits, and the two central rings are each formed by seven beta subunits. The catalytic chamber with the active sites is on the inside of the barrel.

It localises to the cytoplasm. The protein localises to the nucleus. The catalysed reaction is Cleavage of peptide bonds with very broad specificity.. Functionally, the proteasome is a multicatalytic proteinase complex which is characterized by its ability to cleave peptides with Arg, Phe, Tyr, Leu, and Glu adjacent to the leaving group at neutral or slightly basic pH. The proteasome has an ATP-dependent proteolytic activity. In Schizosaccharomyces pombe (strain 972 / ATCC 24843) (Fission yeast), this protein is Probable proteasome subunit beta type-1 (pre3).